Reading from the N-terminus, the 628-residue chain is Glutamyl-tRNA(Gln) amidotransferase subunit E (628 aa).

The protein belongs to the GatB/GatE family. GatE subfamily. In terms of assembly, heterodimer of GatD and GatE.

It carries out the reaction L-glutamyl-tRNA(Gln) + L-glutamine + ATP + H2O = L-glutaminyl-tRNA(Gln) + L-glutamate + ADP + phosphate + H(+). Functionally, allows the formation of correctly charged Gln-tRNA(Gln) through the transamidation of misacylated Glu-tRNA(Gln) in organisms which lack glutaminyl-tRNA synthetase. The reaction takes place in the presence of glutamine and ATP through an activated gamma-phospho-Glu-tRNA(Gln). The GatDE system is specific for glutamate and does not act on aspartate. The sequence is that of Glutamyl-tRNA(Gln) amidotransferase subunit E from Sulfurisphaera tokodaii (strain DSM 16993 / JCM 10545 / NBRC 100140 / 7) (Sulfolobus tokodaii).